Here is a 506-residue protein sequence, read N- to C-terminus: UBX domain-containing protein 4 (506 aa).

Residues 1-199 (MLWFQGAIPA…PAEDLTVRVE (199 aa)) form an interaction with UBQLN1 region. The Cytoplasmic portion of the chain corresponds to 1–411 (MLWFQGAIPA…VPSSSGDIWT (411 aa)). 2 stretches are compositionally biased toward polar residues: residues 114–136 (SLKG…TPSA) and 177–189 (SLSQ…SNQR). The interval 114-193 (SLKGETSVTN…GCSNQRPAED (80 aa)) is disordered. Positions 313–391 (DRSTIARIQF…ELAPSASVVL (79 aa)) constitute a UBX domain. The stretch at 412 to 432 (LLGTVLYPFLAIWRLISNFLF) is an intramembrane region. The Cytoplasmic portion of the chain corresponds to 433–506 (SNPPPAQTSA…TWNGNSTQQM (74 aa)). The interval 437-506 (PAQTSARATS…TWNGNSTQQM (70 aa)) is disordered. The span at 444-456 (ATSTEPSNSASSS) shows a compositional bias: low complexity. Residues 457–489 (KSEKREPVRKRVLEKRGEDFKKEGKIYRLRTQD) show a composition bias toward basic and acidic residues. The residue at position 487 (threonine 487) is a Phosphothreonine. The span at 496–506 (NTWNGNSTQQM) shows a compositional bias: polar residues.

As to quaternary structure, directly interacts with VCP. Interacts with UBQLN1. Forms a complex with VCP and UBQLN1.

The protein resides in the endoplasmic reticulum membrane. Its subcellular location is the nucleus envelope. Involved in endoplasmic reticulum-associated protein degradation (ERAD). Acts as a platform to recruit both UBQLN1 and VCP to the ER during ERAD. The sequence is that of UBX domain-containing protein 4 (Ubxn4) from Rattus norvegicus (Rat).